A 344-amino-acid polypeptide reads, in one-letter code: MLLSKLVDLIKSGESKFIKANIFENIDIENAASIDIALKNQISFLEENNILKDNLGKTSASAIITSNNNEILGLLESLNISNIVVENPRIAFAEVLNFLYEEINFNPGIDDSAVIKSSAKVGKNCYVGPNVYIGENSIIGDNNKIFPGTTILGNVRLGNNNVIHPNCVIYENTSIENNCVINSNTVIGSEGFGFIPQDGKWIKMPQKGCVIIKSFVEIGTNCCIDRPSVGNTFIDEGTKMDNLVQIGHGVKIGKNCAFAAQVGIAGGAVIGNSVILAGQVGVNNRVKVGNNVIASSKCGIHCDIEDGEVVSGFPAMKNKSWLRSSSVFKKLPELAKKLRQLDKK.

Residue H248 is the Proton acceptor of the active site.

It belongs to the transferase hexapeptide repeat family. LpxD subfamily. In terms of assembly, homotrimer.

The enzyme catalyses a UDP-3-O-[(3R)-3-hydroxyacyl]-alpha-D-glucosamine + a (3R)-hydroxyacyl-[ACP] = a UDP-2-N,3-O-bis[(3R)-3-hydroxyacyl]-alpha-D-glucosamine + holo-[ACP] + H(+). It functions in the pathway bacterial outer membrane biogenesis; LPS lipid A biosynthesis. Its function is as follows. Catalyzes the N-acylation of UDP-3-O-acylglucosamine using 3-hydroxyacyl-ACP as the acyl donor. Is involved in the biosynthesis of lipid A, a phosphorylated glycolipid that anchors the lipopolysaccharide to the outer membrane of the cell. This is UDP-3-O-acylglucosamine N-acyltransferase from Prochlorococcus marinus subsp. pastoris (strain CCMP1986 / NIES-2087 / MED4).